A 625-amino-acid chain; its full sequence is Voltage-gated potassium channel KCNC4 (625 aa).

Disordered regions lie at residues 1–24 (MISS…SKTC) and 65–86 (LADP…SSGS). The interval 1 to 28 (MISSVCVSSYRGRKSGNKPPSKTCLKEE) is inactivation gate. Topologically, residues 1 to 227 (MISSVCVSSY…EDPYSSRAAR (227 aa)) are cytoplasmic. 4 positions are modified to phosphoserine: Ser8, Ser9, Ser15, and Ser21. A compositionally biased stretch (gly residues) spans 77-86 (DGGGAGSSGS). The Zn(2+) site is built by His117, Cys123, Cys144, and Cys145. Residues 228–248 (VVAFASLFFILVSITTFCLET) traverse the membrane as a helical segment. 2 N-linked (GlcNAc...) asparagine glycosylation sites follow: Asn257 and Asn266. A helical membrane pass occupies residues 279 to 299 (EPILTYIEGVCVMWFTLEFLV). Over 300–313 (RIVCCPDTLDFVKN) the chain is Cytoplasmic. The chain crosses the membrane as a helical span at residues 314–334 (LLNIIDFVAILPFYLEVGLSG). Residues 346 to 365 (FLRVVRFVRILRIFKLTRHF) traverse the membrane as a helical; Voltage-sensor segment. Topologically, residues 366-381 (VGLRVLGHTLRASTNE) are cytoplasmic. Residues 382–402 (FLLLIIFLALGVLIFATMIYY) form a helical membrane-spanning segment. Residues Thr437, Leu438, Gly439, and Tyr440 each coordinate K(+). Positions 437 to 442 (TLGYGD) match the Selectivity filter motif. A helical transmembrane segment spans residues 453-473 (VGALCALAGVLTIAMPVPVIV). Topologically, residues 474–625 (NNFGMYYSLA…CVPVSHTCAL (152 aa)) are cytoplasmic. A disordered region spans residues 490–581 (PKKRKKHVPR…RRALRRSGTR (92 aa)). The segment covering 528 to 543 (AREEGMVERKRADSKQ) has biased composition (basic and acidic residues).

Belongs to the potassium channel family. C (Shaw) (TC 1.A.1.2) subfamily. Kv3.4/KCNC4 sub-subfamily. In terms of assembly, homotetramer. Heterotetramer of potassium channel proteins. Post-translationally, phosphorylation of serine residues in the inactivation gate inhibits rapid channel closure.

It localises to the membrane. It catalyses the reaction K(+)(in) = K(+)(out). In terms of biological role, voltage-gated potassium channel that opens in response to the voltage difference across the membrane, forming a potassium-selective channel through which potassium ions pass in accordance with their electrochemical gradient. The channel displays rapid activation and inactivation kinetics. This is Voltage-gated potassium channel KCNC4 from Rattus norvegicus (Rat).